The chain runs to 215 residues: Protein-methionine-sulfoxide reductase heme-binding subunit MsrQ (215 aa).

A run of 6 helical transmembrane segments spans residues 17–37 (AAIWSLYVIGLCPGLWYFYLA), 50–70 (FEHLLGIWALRFLCLGLLVTP), 85–105 (ALGLIAFYYVLAHFTVYLVLD), 121–141 (PYIMLGMAGLIILIPLALTSN), 152–172 (WNTLHKLVYLVLIVGVLHFVL), and 177–197 (ITLEPVFYISTMVVLLGYRLV).

It belongs to the MsrQ family. As to quaternary structure, heterodimer of a catalytic subunit (MsrP) and a heme-binding subunit (MsrQ). Requires FMN as cofactor. It depends on heme b as a cofactor.

The protein localises to the cell inner membrane. Part of the MsrPQ system that repairs oxidized periplasmic proteins containing methionine sulfoxide residues (Met-O), using respiratory chain electrons. Thus protects these proteins from oxidative-stress damage caused by reactive species of oxygen and chlorine generated by the host defense mechanisms. MsrPQ is essential for the maintenance of envelope integrity under bleach stress, rescuing a wide series of structurally unrelated periplasmic proteins from methionine oxidation. MsrQ provides electrons for reduction to the reductase catalytic subunit MsrP, using the quinone pool of the respiratory chain. The polypeptide is Protein-methionine-sulfoxide reductase heme-binding subunit MsrQ (Agrobacterium fabrum (strain C58 / ATCC 33970) (Agrobacterium tumefaciens (strain C58))).